We begin with the raw amino-acid sequence, 169 residues long: MLLPIVVLVGLPGAGKSTIGRRLARALNTELVDSDELIERATGKACGAVFSELGEPAFRELEAIHVAEALKSSGVVSLGGGSVLTESTRELLKGQDVVWIDVPVEEGIRRTANERSRPVLQAADPAEHYRNLVKVRTPLYEEVATYRLRTNNRSPQQVVAAVLHHLEID.

Gly13–Thr18 lines the ATP pocket. Ser17 contacts Mg(2+). Substrate-binding residues include Asp35, Arg59, and Gly80. Arg117 serves as a coordination point for ATP. Arg136 is a substrate binding site. Arg153 is a binding site for ATP.

The protein belongs to the shikimate kinase family. As to quaternary structure, monomer. It depends on Mg(2+) as a cofactor.

The protein localises to the cytoplasm. The catalysed reaction is shikimate + ATP = 3-phosphoshikimate + ADP + H(+). The protein operates within metabolic intermediate biosynthesis; chorismate biosynthesis; chorismate from D-erythrose 4-phosphate and phosphoenolpyruvate: step 5/7. In terms of biological role, catalyzes the specific phosphorylation of the 3-hydroxyl group of shikimic acid using ATP as a cosubstrate. The protein is Shikimate kinase of Corynebacterium glutamicum (strain ATCC 13032 / DSM 20300 / JCM 1318 / BCRC 11384 / CCUG 27702 / LMG 3730 / NBRC 12168 / NCIMB 10025 / NRRL B-2784 / 534).